A 95-amino-acid polypeptide reads, in one-letter code: Integration host factor subunit beta (95 aa).

A disordered region spans residues 56–76 (RAPRTGRNPKTGTSVELDGKY).

Belongs to the bacterial histone-like protein family. Heterodimer of an alpha and a beta chain.

Functionally, this protein is one of the two subunits of integration host factor, a specific DNA-binding protein that functions in genetic recombination as well as in transcriptional and translational control. In Shewanella woodyi (strain ATCC 51908 / MS32), this protein is Integration host factor subunit beta.